Consider the following 292-residue polypeptide: Poly-beta-1,6-N-acetyl-D-glucosamine N-deacetylase (292 aa).

A signal peptide spans 1 to 28 (MKYRKFIILVLSILIILPVSTLDGHHIA). Positions 114–292 (RSVWINFDDM…WDGFHEKDET (179 aa)) constitute a NodB homology domain.

The protein belongs to the polysaccharide deacetylase family.

The protein localises to the secreted. It is found in the cell wall. Catalyzes the N-deacetylation of poly-beta-1,6-N-acetyl-D-glucosamine (PNAG, also referred to as PIA), a biofilm adhesin polysaccharide. N-deacetylation is crucial for attachment of the polysaccharide to the bacterial cell surface; it leads to the introduction of positive charges in the otherwise neutral PIA polymer, allowing electrostatic interactions. The sequence is that of Poly-beta-1,6-N-acetyl-D-glucosamine N-deacetylase (icaB) from Staphylococcus aureus (strain COL).